The sequence spans 189 residues: Recombination protein RecR (189 aa).

The segment at 48–63 (CQTCFHLSAEPLCDIC) adopts a C4-type zinc-finger fold. One can recognise a Toprim domain in the interval 71-165 (QLLCVVADSR…QVSRIAYGLP (95 aa)).

The protein belongs to the RecR family.

In terms of biological role, may play a role in DNA repair. It seems to be involved in an RecBC-independent recombinational process of DNA repair. It may act with RecF and RecO. The polypeptide is Recombination protein RecR (Prochlorococcus marinus (strain MIT 9303)).